Here is a 750-residue protein sequence, read N- to C-terminus: Photosystem I P700 chlorophyll a apoprotein A1 (750 aa).

Transmembrane regions (helical) follow at residues 70-93, 156-179, 195-219, 291-309, 346-369, 385-411, 433-455, and 531-549; these read VFSA…FHGA, LYCT…FHYH, LNHH…HVSL, IAHH…GHMY, WHAQ…HHMY, LSLF…IFMV, AIIS…LYIH, and FLVH…LILL. Residues C573 and C582 each contribute to the [4Fe-4S] cluster site. Transmembrane regions (helical) follow at residues 589 to 610 and 664 to 686; these read HVFL…HFSW and LSAY…MFLF. Residue H675 coordinates chlorophyll a'. The chlorophyll a site is built by M683 and Y691. W692 contacts phylloquinone. Residues 724–744 traverse the membrane as a helical segment; sequence AVGVTHYLLGGIATTWAFFLA.

This sequence belongs to the PsaA/PsaB family. The PsaA/B heterodimer binds the P700 chlorophyll special pair and subsequent electron acceptors. PSI consists of a core antenna complex that captures photons, and an electron transfer chain that converts photonic excitation into a charge separation. The eukaryotic PSI reaction center is composed of at least 11 subunits. It depends on P700 is a chlorophyll a/chlorophyll a' dimer, A0 is one or more chlorophyll a, A1 is one or both phylloquinones and FX is a shared 4Fe-4S iron-sulfur center. as a cofactor.

The protein resides in the plastid. Its subcellular location is the chloroplast thylakoid membrane. It catalyses the reaction reduced [plastocyanin] + hnu + oxidized [2Fe-2S]-[ferredoxin] = oxidized [plastocyanin] + reduced [2Fe-2S]-[ferredoxin]. Functionally, psaA and PsaB bind P700, the primary electron donor of photosystem I (PSI), as well as the electron acceptors A0, A1 and FX. PSI is a plastocyanin-ferredoxin oxidoreductase, converting photonic excitation into a charge separation, which transfers an electron from the donor P700 chlorophyll pair to the spectroscopically characterized acceptors A0, A1, FX, FA and FB in turn. Oxidized P700 is reduced on the lumenal side of the thylakoid membrane by plastocyanin. The chain is Photosystem I P700 chlorophyll a apoprotein A1 from Nicotiana sylvestris (Wood tobacco).